A 385-amino-acid polypeptide reads, in one-letter code: Succinate--CoA ligase [ADP-forming] subunit beta (385 aa).

The 236-residue stretch at 9–244 (KEILRKYGVP…QDEEDPLETR (236 aa)) folds into the ATP-grasp domain. ATP contacts are provided by residues lysine 46, 53-55 (GRG), glutamate 99, cysteine 102, and glutamate 107. The Mg(2+) site is built by asparagine 199 and aspartate 213. Substrate contacts are provided by residues asparagine 264 and 321 to 323 (GIM).

The protein belongs to the succinate/malate CoA ligase beta subunit family. Heterotetramer of two alpha and two beta subunits. The cofactor is Mg(2+).

It catalyses the reaction succinate + ATP + CoA = succinyl-CoA + ADP + phosphate. The catalysed reaction is GTP + succinate + CoA = succinyl-CoA + GDP + phosphate. The protein operates within carbohydrate metabolism; tricarboxylic acid cycle; succinate from succinyl-CoA (ligase route): step 1/1. Functionally, succinyl-CoA synthetase functions in the citric acid cycle (TCA), coupling the hydrolysis of succinyl-CoA to the synthesis of either ATP or GTP and thus represents the only step of substrate-level phosphorylation in the TCA. The beta subunit provides nucleotide specificity of the enzyme and binds the substrate succinate, while the binding sites for coenzyme A and phosphate are found in the alpha subunit. This chain is Succinate--CoA ligase [ADP-forming] subunit beta, found in Rickettsia bellii (strain OSU 85-389).